Consider the following 497-residue polypeptide: Xylooligosaccharide oxidase (497 aa).

The N-terminal stretch at 1–16 is a signal peptide; the sequence is MHLLPLTVSATAVVSA. A disulfide bridge connects residues cysteine 30 and cysteine 79. 2 N-linked (GlcNAc...) asparagine glycosylation sites follow: asparagine 42 and asparagine 117. An FAD-binding PCMH-type domain is found at 57–230; the sequence is LPYTPAAIAK…ASFRFKTFAA (174 aa). The 6-(S-cysteinyl)-8alpha-(pros-histidyl)-FAD (His-Cys) cross-link spans 94–155; that stretch reads HSYASFGLGG…GKRAFSHGTC (62 aa). Threonine 154 serves as a coordination point for substrate. Residues asparagine 192, asparagine 233, and asparagine 245 are each glycosylated (N-linked (GlcNAc...) asparagine). Substrate is bound at residue arginine 272. N-linked (GlcNAc...) asparagine glycans are attached at residues asparagine 289 and asparagine 307. Substrate is bound by residues glutamate 412 and tyrosine 451.

The protein belongs to the oxygen-dependent FAD-linked oxidoreductase family. Requires FAD as cofactor. In terms of processing, the FAD cofactor is bound via a bicovalent 6-S-cysteinyl, 8alpha-N1-histidyl FAD linkage.

It is found in the secreted. The enzyme catalyses D-xylobiose + O2 = D-xylobiono-1,5-lactone + H2O2. It catalyses the reaction D-xylotriose + O2 = D-xylotriono-1,5-lactone + H2O2. It carries out the reaction D-xylotetraose + O2 = D-xylotetraono-1,5-lactone + H2O2. Its function is as follows. Catalyzes the selective oxidation of C1 hydroxyl moieties on mono-, oligo- and polysaccharides with concomitant reduction of molecular oxygen to hydrogen peroxide. This results in the formation of the corresponding lactones, which typically undergo spontaneous hydrolysis. Xylooligosaccharide oxidase is able to oxidize a variety of substrates including D-xylose, D-cellobiose, lactose and arabinose. The enzyme acts primarily on xylooligosaccharides, indicating that it prefers pentose-based oligosaccharides over hexose-based oligosaccharides. In Thermothelomyces thermophilus (strain ATCC 42464 / BCRC 31852 / DSM 1799) (Sporotrichum thermophile), this protein is Xylooligosaccharide oxidase.